Reading from the N-terminus, the 1014-residue chain is Exportin-T (1014 aa).

Belongs to the exportin family.

Its subcellular location is the nucleus. It localises to the cytoplasm. TRNA nucleus export receptor which facilitates tRNA translocation across the nuclear pore complex. Involved in pre-tRNA splicing, probably by affecting the interaction of pre-tRNA with splicing endonuclease. This Podospora anserina (strain S / ATCC MYA-4624 / DSM 980 / FGSC 10383) (Pleurage anserina) protein is Exportin-T (LOS1).